The sequence spans 513 residues: Fumarate reductase (513 aa).

41-55 (AIVIGGGLAGLSATN) contacts FAD. The residue at position 100 (S100) is a Phosphoserine. Active-site residues include H288 and R311.

This sequence belongs to the FAD-dependent oxidoreductase 2 family. FRD/SDH subfamily. The cofactor is FAD.

It localises to the cytoplasm. Its subcellular location is the mitochondrion. The protein resides in the nucleus. It catalyses the reaction succinate + NAD(+) = fumarate + NADH + H(+). Irreversibly catalyzes the reduction of fumarate to succinate. The polypeptide is Fumarate reductase (osm1) (Schizosaccharomyces pombe (strain 972 / ATCC 24843) (Fission yeast)).